The sequence spans 92 residues: uncharacterized protein (92 aa).

In terms of biological role, homolog of shope fibroma virus T4A ORF. This is an uncharacterized protein from Swinepox virus (strain Kasza) (SWPV).